The following is a 587-amino-acid chain: V-type proton ATPase catalytic subunit A (587 aa).

243–250 (GAFGCGKT) serves as a coordination point for ATP.

It belongs to the ATPase alpha/beta chains family. In terms of assembly, V-ATPase is a heteromultimeric enzyme composed of a peripheral catalytic V1 complex (main components: subunits A, B, C, D, E, and F) attached to an integral membrane V0 proton pore complex (main component: the proteolipid protein).

The enzyme catalyses ATP + H2O + 4 H(+)(in) = ADP + phosphate + 5 H(+)(out). In terms of biological role, catalytic subunit of the peripheral V1 complex of vacuolar ATPase. V-ATPase vacuolar ATPase is responsible for acidifying a variety of intracellular compartments in eukaryotic cells. The protein is V-type proton ATPase catalytic subunit A of Cyanidium caldarium (Red alga).